We begin with the raw amino-acid sequence, 350 residues long: uncharacterized protein (350 aa).

An OBG-type G domain is found at 171–334; that stretch reads PTVVIAGYPN…LKERLKKIAI (164 aa). GTP contacts are provided by residues 177–184, 219–223, and 286–289; these read GYPNVGKS, DTPGL, and NKID.

The protein belongs to the TRAFAC class OBG-HflX-like GTPase superfamily. OBG GTPase family. NOG subfamily.

This is an uncharacterized protein from Methanocaldococcus jannaschii (strain ATCC 43067 / DSM 2661 / JAL-1 / JCM 10045 / NBRC 100440) (Methanococcus jannaschii).